A 145-amino-acid polypeptide reads, in one-letter code: 5-hydroxymethyl-dUMP N-hydrolase (145 aa).

5-hydroxymethyl-dUMP is bound by residues Gly-7, Ile-9, Arg-10, Gly-11, Ser-79, Gly-81, Glu-85, and Ser-109.

Belongs to the 2'-deoxynucleoside 5'-phosphate N-hydrolase 1 family. As to quaternary structure, monomer and homodimer.

The protein resides in the cytoplasm. It is found in the nucleus. It catalyses the reaction 5-hydroxymethyl-dUMP + H2O = 5-hydroxymethyluracil + 2-deoxy-D-ribose 5-phosphate. Part of a nucleotide salvage pathway that eliminates epigenetically modified 5-hydroxymethyl-dCMP (hmdCMP) in a two-step process entailing deamination to cytotoxic 5-hydroxymethyl-dUMP (hmdUMP), followed by its hydrolysis into 5-hydroxymethyluracil (hmU) and 2-deoxy-D-ribose 5-phosphate (deoxyribosephosphate). Catalyzes the second step in that pathway, the hydrolysis of the N-glycosidic bond in hmdUMP, degrading this cytotoxic nucleotide to avoid its genomic integration. The sequence is that of 5-hydroxymethyl-dUMP N-hydrolase from Esox lucius (Northern pike).